A 683-amino-acid polypeptide reads, in one-letter code: Kinesin-like protein KIF2B (683 aa).

T125 carries the post-translational modification Phosphothreonine; by PLK1. Positions L141–R176 form a coiled coil. The residue at position 204 (S204) is a Phosphoserine; by PLK1. One can recognise a Kinesin motor domain in the interval R213–I543. An ATP-binding site is contributed by G303 to T310. Residues Q640 to H672 adopt a coiled-coil conformation.

This sequence belongs to the TRAFAC class myosin-kinesin ATPase superfamily. Kinesin family. MCAK/KIF2 subfamily. Phosphorylation at Thr-125 by PLK1 is required for activity in the correction of kinetochore-microtubules attachment errors, while phosphorylation at Ser-204 also by PLK1 is required for the kinetochore localization and activity in prometaphase.

It localises to the cytoplasm. The protein resides in the cytoskeleton. The protein localises to the microtubule organizing center. Its subcellular location is the centrosome. It is found in the spindle. It localises to the chromosome. The protein resides in the centromere. The protein localises to the kinetochore. Plus end-directed microtubule-dependent motor required for spindle assembly and chromosome movement during mitosis. Has microtubule depolymerization activity. Plays a role in chromosome congression. The protein is Kinesin-like protein KIF2B of Bos taurus (Bovine).